A 188-amino-acid polypeptide reads, in one-letter code: MINAQDIKNGTCIRMDGKLYFCIEFLHVKPGKGNTFMRTKLKDVVSGYVLERRFNIGEKLEDVRVERRPYQYLYKEGEDYIFMNQETFDQHPIAHDLINGVDFLLEGAVVEVVSDASTETVLYADMPIKVQMKVTYTEPGLKGDTATNTLKPATVESGATVRVPLFISEGETIEIDTRDGSYVGRVKA.

This sequence belongs to the elongation factor P family.

It is found in the cytoplasm. The protein operates within protein biosynthesis; polypeptide chain elongation. Its function is as follows. Involved in peptide bond synthesis. Stimulates efficient translation and peptide-bond synthesis on native or reconstituted 70S ribosomes in vitro. Probably functions indirectly by altering the affinity of the ribosome for aminoacyl-tRNA, thus increasing their reactivity as acceptors for peptidyl transferase. In Bacteroides fragilis (strain ATCC 25285 / DSM 2151 / CCUG 4856 / JCM 11019 / LMG 10263 / NCTC 9343 / Onslow / VPI 2553 / EN-2), this protein is Elongation factor P.